The following is a 475-amino-acid chain: Adenosylhomocysteinase (475 aa).

Substrate contacts are provided by threonine 60, aspartate 133, and glutamate 198. Residue 199 to 201 (TTT) participates in NAD(+) binding. Substrate contacts are provided by lysine 228 and aspartate 232. NAD(+) contacts are provided by residues asparagine 233, 262 to 267 (GYGDVG), glutamate 285, asparagine 320, 341 to 343 (IGH), and asparagine 389.

Belongs to the adenosylhomocysteinase family. Requires NAD(+) as cofactor.

The protein resides in the cytoplasm. The enzyme catalyses S-adenosyl-L-homocysteine + H2O = L-homocysteine + adenosine. The protein operates within amino-acid biosynthesis; L-homocysteine biosynthesis; L-homocysteine from S-adenosyl-L-homocysteine: step 1/1. Functionally, may play a key role in the regulation of the intracellular concentration of adenosylhomocysteine. This Syntrophotalea carbinolica (strain DSM 2380 / NBRC 103641 / GraBd1) (Pelobacter carbinolicus) protein is Adenosylhomocysteinase.